We begin with the raw amino-acid sequence, 910 residues long: Lysine-specific demethylase 7 homolog (910 aa).

Positions 1–11 (MDGNDINIQKN) are enriched in polar residues. Disordered stretches follow at residues 1-58 (MDGN…HQTP), 103-162 (NKMG…GSEP), and 183-212 (QEEL…DRCG). The segment covering 25-35 (QHSDHKNHESA) has biased composition (basic and acidic residues). Residues 43–58 (YTASQPALSSTEHQTP) are compositionally biased toward polar residues. A compositionally biased stretch (basic and acidic residues) spans 118–130 (PKSEPKIEPHVTD). A compositionally biased stretch (polar residues) spans 150 to 160 (ESNQNYVSNGS). The span at 200 to 210 (PEQKTPKESDR) shows a compositional bias: basic and acidic residues. The PHD-type zinc-finger motif lies at 208-290 (SDRCGGCGKF…KFFCPKCVPH (83 aa)). The JmjC domain maps to 441–612 (SDNNEMKEIA…MQMRVYHLEN (172 aa)). Residues 505–510 (TDFHVD), Tyr-518, Lys-525, and His-580 contribute to the substrate site. Fe cation is bound by residues His-508 and Asp-510. Position 580 (His-580) interacts with Fe cation. Disordered regions lie at residues 712–790 (KIQN…PSEV) and 864–910 (EAVH…KLKM). Residues 748–757 (YKKKYTKKAK) show a composition bias toward basic residues. Residues 758-780 (KDNDDAPKVKKAKKEEVPEEKVP) are compositionally biased toward basic and acidic residues.

The protein belongs to the JHDM1 histone demethylase family. JHDM1D subfamily. Fe(2+) serves as cofactor. As to expression, mainly expressed in neurons. Also weakly expressed in some muscle, intestinal and hypodermal cells.

The protein localises to the nucleus. Its activity is regulated as follows. Competitively inhibited by 2-hydroxyglutarate. Histone demethylase required for nervous system development. Specifically demethylates dimethylated 'Lys-9', 'Lys-23' and 'Lys-27' (H3K9me2, H3K23me2 and H3K27me2, respectively) of histone H3, thereby playing a central role in histone code. Promotes mitochondrial stress-induced longevity. This is Lysine-specific demethylase 7 homolog (jmjd-1.2) from Caenorhabditis elegans.